A 248-amino-acid chain; its full sequence is 3-oxoacyl-[acyl-carrier-protein] reductase FabG (248 aa).

NADP(+)-binding positions include 14–17 (GGSR), 65–66 (DV), and asparagine 92. A substrate-binding site is contributed by serine 144. Tyrosine 157 (proton acceptor) is an active-site residue. Residues 157-161 (YAAAK) and isoleucine 190 contribute to the NADP(+) site.

This sequence belongs to the short-chain dehydrogenases/reductases (SDR) family. As to quaternary structure, homotetramer.

It carries out the reaction a (3R)-hydroxyacyl-[ACP] + NADP(+) = a 3-oxoacyl-[ACP] + NADPH + H(+). Its pathway is lipid metabolism; fatty acid biosynthesis. Its function is as follows. Catalyzes the NADPH-dependent reduction of beta-ketoacyl-ACP substrates to beta-hydroxyacyl-ACP products, the first reductive step in the elongation cycle of fatty acid biosynthesis. In Chlamydia trachomatis serovar D (strain ATCC VR-885 / DSM 19411 / UW-3/Cx), this protein is 3-oxoacyl-[acyl-carrier-protein] reductase FabG (fabG).